The sequence spans 652 residues: tRNA-guanine(15) transglycosylase (652 aa).

The active-site Nucleophile is Asp-88. Residues Asp-123 and Ala-194 each coordinate substrate. Residues Cys-280, Cys-282, and Cys-285 each coordinate Zn(2+). The PUA domain maps to 577–652 (KYRVVIDSEV…AAVSVRSGFK (76 aa)).

It belongs to the archaeosine tRNA-ribosyltransferase family. The cofactor is Zn(2+).

It carries out the reaction guanosine(15) in tRNA + 7-cyano-7-deazaguanine = 7-cyano-7-carbaguanosine(15) in tRNA + guanine. It participates in tRNA modification; archaeosine-tRNA biosynthesis. In terms of biological role, exchanges the guanine residue with 7-cyano-7-deazaguanine (preQ0) at position 15 in the dihydrouridine loop (D-loop) of archaeal tRNAs. This Methanococcus aeolicus (strain ATCC BAA-1280 / DSM 17508 / OCM 812 / Nankai-3) protein is tRNA-guanine(15) transglycosylase.